The chain runs to 1454 residues: ABC transporter G family member 43 (1454 aa).

Residues 23 to 47 are disordered; it reads ARSLRDGDDPFRRSAAASRRDAGDD. Over residues 25–44 the composition is skewed to basic and acidic residues; it reads SLRDGDDPFRRSAAASRRDA. N-linked (GlcNAc...) asparagine glycosylation occurs at N163. The ABC transporter 1 domain maps to 170–444; the sequence is EGLVSLFISS…FESAGFRCPE (275 aa). Position 204–211 (204–211) interacts with ATP; that stretch reads GPPSSGKS. N393 carries an N-linked (GlcNAc...) asparagine glycan. Positions 524–735 constitute an ABC transmembrane type-2 1 domain; the sequence is LKAVMSREWL…SNNALSVNEF (212 aa). Transmembrane regions (helical) follow at residues 540 to 560, 577 to 597, 613 to 630, 637 to 656, 659 to 679, and 684 to 704; these read FLFI…MTLF, VGAL…ELQL, FFPA…KVPL, LWIV…GRFF, FLAY…LGAI, and VVAN…GGFL. N745 carries an N-linked (GlcNAc...) asparagine glycan. Residues 775-795 traverse the membrane as a helical segment; the sequence is IGAMIGFMIVFNILYLCALTF. The segment at 804-823 is disordered; it reads TVVSDDDTKSELEAESNQEQ. N-linked (GlcNAc...) asparagine glycans are attached at residues N829 and N832. Residues 852–1104 form the ABC transporter 2 domain; sequence LSFNHMNYYV…ILVEYFEAIP (253 aa). 897–904 serves as a coordination point for ATP; sequence GVSGAGKT. Residue N951 is glycosylated (N-linked (GlcNAc...) asparagine). The region spanning 1178–1391 is the ABC transmembrane type-2 2 domain; that stretch reads QCVANTWKQF…TIYGVIASQF (214 aa). Transmembrane regions (helical) follow at residues 1196 to 1216, 1236 to 1256, 1284 to 1304, 1314 to 1334, 1341 to 1361, 1372 to 1392, and 1423 to 1443; these read YNAM…TVFW, YAAV…VVSV, FCYS…MIGY, FLFF…MLVA, LAAV…GFII, WFYW…SQFA, and FLGY…FLFG.

This sequence belongs to the ABC transporter superfamily. ABCG family. PDR (TC 3.A.1.205) subfamily. As to expression, specifically expressed in the vasculature of roots, stems, panicles, sheaths and leaves.

The protein localises to the cell membrane. Its function is as follows. ABC transporter modulating cadmium (Cd) import, thus controlling Cd(2+) accumulation to prevent phytotoxicity. Confers high tolerance to Cd in yeast. Prevents leaf bacteria proliferation, such as Xanthomonas oryzae pv. oryzicola (Xoc) RS105 and X.oryzae pv. oryzae (Xoo) PXO99, by triggering Cd accumulation, which in turn impairs bacterial virulence factors. In Oryza sativa subsp. japonica (Rice), this protein is ABC transporter G family member 43.